The primary structure comprises 306 residues: Pantothenate kinase (306 aa).

90–97 contacts ATP; the sequence is GSVAVGKS.

Belongs to the prokaryotic pantothenate kinase family.

It is found in the cytoplasm. The catalysed reaction is (R)-pantothenate + ATP = (R)-4'-phosphopantothenate + ADP + H(+). It participates in cofactor biosynthesis; coenzyme A biosynthesis; CoA from (R)-pantothenate: step 1/5. The polypeptide is Pantothenate kinase (Listeria monocytogenes serotype 4a (strain HCC23)).